Consider the following 3434-residue polypeptide: Genome polyprotein (3434 aa).

Over 1-106 the chain is Cytoplasmic; that stretch reads MSKKPGGPGR…NRGTKKKRGN (106 aa). Residues 2–15 are interaction with host EXOC1; it reads SKKPGGPGRNRAIN. Residues 37–72 are hydrophobic; homodimerization of capsid protein C; the sequence is LLDGRGPVRFVLALMTFFKFTALAPTKALLGRWKRI. A propeptide spans 105 to 126 (ER anchor for the capsid protein C, removed in mature form by serine protease NS3); it reads GNNGPGLVMIITLMTVVSMVSS. A helical transmembrane segment spans residues 107–126; it reads NGPGLVMIITLMTVVSMVSS. Topologically, residues 127–248 are extracellular; sequence LKLSNFQGKV…DSTKASRYLM (122 aa). N-linked (GlcNAc...) asparagine; by host glycosylation occurs at Asn-141. A helical transmembrane segment spans residues 249 to 273; the sequence is KTENWIIRNPGYAFVAVLLGWMLGS. Topologically, residues 274-278 are cytoplasmic; sequence NNGQR. A helical membrane pass occupies residues 279-293; that stretch reads VVFVVLLLLVAPAYS. The Extracellular segment spans residues 294–745; that stretch reads FNCLGMSNRD…QVFGGAFRTL (452 aa). 8 disulfide bridges follow: Cys-296–Cys-323, Cys-353–Cys-409, Cys-353–Cys-414, Cys-367–Cys-398, Cys-385–Cys-409, Cys-385–Cys-414, Cys-483–Cys-580, and Cys-597–Cys-628. The tract at residues 391-404 is fusion peptide; the sequence is DRGWGNGCGLFGKG. The chain crosses the membrane as a helical span at residues 746–766; it reads FGGMSWITQGLMGALLLWMGV. The Cytoplasmic segment spans residues 767–772; the sequence is NARDRS. Residues 773-793 traverse the membrane as a helical segment; it reads IALVMLATGGVLLFLATNVHA. At 794–1218 the chain is on the extracellular side; the sequence is DSGCAIDVGR…AFAEANSGGD (425 aa). 2 cysteine pairs are disulfide-bonded: Cys-797/Cys-808 and Cys-848/Cys-936. Residues Asn-923, Asn-968, and Asn-1000 are each glycosylated (N-linked (GlcNAc...) asparagine; by host). Disulfide bonds link Cys-972–Cys-1016, Cys-1073–Cys-1122, Cys-1084–Cys-1105, Cys-1084–Cys-1106, Cys-1105–Cys-1109, and Cys-1106–Cys-1109. A helical membrane pass occupies residues 1219-1239; sequence VVHLALIAAFKIQPGFLAMTF. At 1240-1249 the chain is on the cytoplasmic side; it reads LRGKWTNQEN. Residues 1250–1270 traverse the membrane as a helical segment; it reads ILLALGAAFFQMAATDLNFSL. At 1271-1286 the chain is on the lumenal side; sequence PGILNATATAWMLLRA. Residues 1287–1307 traverse the membrane as a helical segment; that stretch reads ATQPSTSAIVMPLLCLLAPGM. Residue Arg-1308 is a topological domain, cytoplasmic. Residues 1309-1329 traverse the membrane as a helical segment; that stretch reads LLYLDTYRITLIIIGICSLIG. Residues 1330–1340 are Lumenal-facing; it reads ERRRAAAKKKG. A helical transmembrane segment spans residues 1341 to 1361; that stretch reads AVLLGLALTSTGQFSASVMAA. Topologically, residues 1362-1373 are cytoplasmic; the sequence is GLMACNPNKKRG. A helical membrane pass occupies residues 1374–1394; sequence WPATEVLTAVGLMFAIVGGLA. At 1395 to 1397 the chain is on the lumenal side; that stretch reads ELD. Residues 1398 to 1418 traverse the membrane as a helical segment; sequence VDSMSIPFVLAGLMAVSYTIS. Over 1419-1475 the chain is Cytoplasmic; sequence GKSTDLWLERAADITWETDAAITGTSQRLDVKLDDDGDFHLINDPGVPWKIWVIRMT. Positions 1426–1465 are interacts with and activates NS3 protease; sequence LERAADITWETDAAITGTSQRLDVKLDDDGDFHLINDPGV. The segment at residues 1476–1496 is an intramembrane region (helical); sequence ALGFAAWTPWAIIPAGIGYWL. Residues 1497–2173 lie on the Cytoplasmic side of the membrane; sequence TVKYAKRGGV…MALEELPDAL (677 aa). The Peptidase S7 domain maps to 1504–1681; it reads GGVFWDTPAP…EREEEPVPEA (178 aa). Active-site charge relay system; for serine protease NS3 activity residues include His-1554, Asp-1578, and Ser-1638. In terms of domain architecture, Helicase ATP-binding spans 1684-1840; sequence ADMLRKKQLT…DTNAPVTDIQ (157 aa). The segment at 1688 to 1691 is important for RNA-binding; it reads RKKQ. 1697–1704 is an ATP binding site; sequence LHPGAGKT. The DEAH box motif lies at 1788–1791; it reads DEAH. The Helicase C-terminal domain maps to 1851–2016; it reads GFEWITEYTG…GLVAQMYGPE (166 aa). Lys-1892 is modified (N6-acetyllysine; by host). The segment at 1956 to 1980 is disordered; sequence ASAAQRRGRVGRNPSQIGDEYHYGG. Positions 2167–2171 are regulates the ATPase activity of NS3 helicase; the sequence is EELPD. The helical transmembrane segment at 2174-2194 threads the bilayer; the sequence is ETITLIVALAVMTAGVFLLLV. The Lumenal portion of the chain corresponds to 2195–2198; sequence QRRG. Positions 2199-2219 form an intramembrane region, helical; the sequence is IGKLGLGGMVLGLATFFLWMA. Position 2220 (Asp-2220) is a topological domain, lumenal. Residues 2221-2241 traverse the membrane as a helical segment; the sequence is VSGTKIAGTLLLALLMMIVLI. Residues 2242-2256 lie on the Cytoplasmic side of the membrane; sequence PEPEKQRSQTDNQLA. The helical transmembrane segment at 2257–2277 threads the bilayer; it reads VFLICVLLVVGVVAANEYGML. Residues 2278–2313 lie on the Lumenal side of the membrane; the sequence is ERTKSDLGKIFSSTRQPQSALPLPSMNALALDLRPA. The segment at residues 2314–2334 is an intramembrane region (helical); it reads TAWALYGGSTVVLTPLIKHLV. Residues 2335–2368 lie on the Lumenal side of the membrane; sequence TSEYITTSLASISAQAGSLFNLPRGLPFTELDFT. A helical transmembrane segment spans residues 2369-2389; it reads VVLVFLGCWGQVSLTTLITAA. Over 2390 to 2446 the chain is Cytoplasmic; that stretch reads ALATLHYGYMLPGWQAEALRAAQRRTAAGIMKNAVVDGLVATDVPELERTTPLMQKK. Residues 2447–2467 traverse the membrane as a helical segment; it reads VGQILLIGVSAAALLVNPCVT. The Lumenal portion of the chain corresponds to 2468-2471; that stretch reads TVRE. A helical membrane pass occupies residues 2472 to 2492; it reads AGILISAALLTLWDNGAIAVW. The Cytoplasmic portion of the chain corresponds to 2493–3434; the sequence is NSTTATGLCH…EVNVQEDRVL (942 aa). One can recognise an mRNA cap 0-1 NS5-type MT domain in the interval 2530–2795; that stretch reads GRPGGRTLGE…DVNLGSGTRA (266 aa). The interval 2567–2587 is disordered; that stretch reads SAARKARRDGNKTGGHPVSRG. Ser-2585 contributes to the S-adenosyl-L-methionine binding site. Phosphoserine is present on Ser-2585. The For 2'-O-MTase activity role is filled by Lys-2590. S-adenosyl-L-methionine contacts are provided by Gly-2615, Trp-2616, Thr-2633, Lys-2634, Asp-2660, and Val-2661. Residue Asp-2675 is the For 2'-O-MTase activity of the active site. S-adenosyl-L-methionine is bound at residue Ile-2676. Residues Lys-2711 and Glu-2747 each act as for 2'-O-MTase activity in the active site. Tyr-2749 lines the S-adenosyl-L-methionine pocket. Glu-2969, His-2973, Cys-2978, and Cys-2981 together coordinate Zn(2+). Residues 3059–3211 form the RdRp catalytic domain; that stretch reads GKMYADDTAG…KPLDDRFANA (153 aa). Zn(2+) is bound by residues His-3246, Cys-3262, and Cys-3381.

In the N-terminal section; belongs to the class I-like SAM-binding methyltransferase superfamily. mRNA cap 0-1 NS5-type methyltransferase family. Homodimer. Interacts (via N-terminus) with host EXOC1 (via C-terminus); this interaction results in EXOC1 degradation through the proteasome degradation pathway. As to quaternary structure, forms heterodimers with envelope protein E in the endoplasmic reticulum and Golgi. In terms of assembly, homodimer; in the endoplasmic reticulum and Golgi. Interacts with protein prM. Interacts with non-structural protein 1. Homodimer; Homohexamer when secreted. Interacts with envelope protein E. NS1 interacts with NS4B. Interacts with host complement protein CFH; this interaction leads to the degradation of C3. As to quaternary structure, interacts (via N-terminus) with serine protease NS3. In terms of assembly, forms a heterodimer with serine protease NS3. May form homooligomers. Forms a heterodimer with NS2B. Interacts with non-structural protein 2A (via N-terminus). Interacts with NS4B. Interacts with unphosphorylated RNA-directed RNA polymerase NS5; this interaction stimulates RNA-directed RNA polymerase NS5 guanylyltransferase activity. As to quaternary structure, interacts with serine protease NS3. In terms of assembly, homodimer. Interacts with host STAT2; this interaction inhibits the phosphorylation of the latter, and, when all viral proteins are present (polyprotein), targets STAT2 for degradation. Interacts with serine protease NS3. Post-translationally, specific enzymatic cleavages in vivo yield mature proteins. Cleavages in the lumen of endoplasmic reticulum are performed by host signal peptidase, whereas cleavages in the cytoplasmic side are performed by serine protease NS3. Signal cleavage at the 2K-4B site requires a prior NS3 protease-mediated cleavage at the 4A-2K site. In terms of processing, cleaved in post-Golgi vesicles by a host furin, releasing the mature small envelope protein M, and peptide pr. This cleavage is incomplete as up to 30% of viral particles still carry uncleaved prM. N-glycosylated. Post-translationally, N-glycosylated. The excreted form is glycosylated and this is required for efficient secretion of the protein from infected cells. In terms of processing, acetylated by host KAT5. Acetylation modulates NS3 RNA-binding and unwinding activities and plays an important positive role for viral replication. Phosphorylated on serines residues. This phosphorylation may trigger NS5 nuclear localization.

The protein resides in the virion. It is found in the host nucleus. Its subcellular location is the host cytoplasm. The protein localises to the host perinuclear region. It localises to the secreted. The protein resides in the virion membrane. It is found in the host endoplasmic reticulum membrane. The enzyme catalyses Selective hydrolysis of -Xaa-Xaa-|-Yaa- bonds in which each of the Xaa can be either Arg or Lys and Yaa can be either Ser or Ala.. It catalyses the reaction RNA(n) + a ribonucleoside 5'-triphosphate = RNA(n+1) + diphosphate. The catalysed reaction is a ribonucleoside 5'-triphosphate + H2O = a ribonucleoside 5'-diphosphate + phosphate + H(+). It carries out the reaction ATP + H2O = ADP + phosphate + H(+). The enzyme catalyses a 5'-end (5'-triphosphoguanosine)-ribonucleoside in mRNA + S-adenosyl-L-methionine = a 5'-end (N(7)-methyl 5'-triphosphoguanosine)-ribonucleoside in mRNA + S-adenosyl-L-homocysteine. It catalyses the reaction a 5'-end (N(7)-methyl 5'-triphosphoguanosine)-ribonucleoside in mRNA + S-adenosyl-L-methionine = a 5'-end (N(7)-methyl 5'-triphosphoguanosine)-(2'-O-methyl-ribonucleoside) in mRNA + S-adenosyl-L-homocysteine + H(+). Functionally, plays a role in virus budding by binding to the cell membrane and gathering the viral RNA into a nucleocapsid that forms the core of a mature virus particle. During virus entry, may induce genome penetration into the host cytoplasm after hemifusion induced by the surface proteins. Can migrate to the cell nucleus where it modulates host functions. Overcomes the anti-viral effects of host EXOC1 by sequestering and degrading the latter through the proteasome degradation pathway. In terms of biological role, inhibits RNA silencing by interfering with host Dicer. Its function is as follows. Prevents premature fusion activity of envelope proteins in trans-Golgi by binding to envelope protein E at pH6.0. After virion release in extracellular space, gets dissociated from E dimers. Acts as a chaperone for envelope protein E during intracellular virion assembly by masking and inactivating envelope protein E fusion peptide. prM is the only viral peptide matured by host furin in the trans-Golgi network probably to avoid catastrophic activation of the viral fusion activity in acidic Golgi compartment prior to virion release. prM-E cleavage is inefficient, and many virions are only partially matured. These uncleaved prM would play a role in immune evasion. Functionally, may play a role in virus budding. Exerts cytotoxic effects by activating a mitochondrial apoptotic pathway through M ectodomain. May display a viroporin activity. In terms of biological role, binds to host cell surface receptor and mediates fusion between viral and cellular membranes. Envelope protein is synthesized in the endoplasmic reticulum in the form of heterodimer with protein prM. They play a role in virion budding in the ER, and the newly formed immature particle is covered with 60 spikes composed of heterodimer between precursor prM and envelope protein E. The virion is transported to the Golgi apparatus where the low pH causes dissociation of PrM-E heterodimers and formation of E homodimers. prM-E cleavage is inefficient, and many virions are only partially matured. These uncleaved prM would play a role in immune evasion. Its function is as follows. Involved in immune evasion, pathogenesis and viral replication. Once cleaved off the polyprotein, is targeted to three destinations: the viral replication cycle, the plasma membrane and the extracellular compartment. Essential for viral replication. Required for formation of the replication complex and recruitment of other non-structural proteins to the ER-derived membrane structures. Excreted as a hexameric lipoparticle that plays a role against host immune response. Antagonizing the complement function. Binds to the host macrophages and dendritic cells. Inhibits signal transduction originating from Toll-like receptor 3 (TLR3). Component of the viral RNA replication complex that functions in virion assembly and antagonizes the host alpha/beta interferon antiviral response. Functionally, required cofactor for the serine protease function of NS3. May have membrane-destabilizing activity and form viroporins. In terms of biological role, displays three enzymatic activities: serine protease, NTPase and RNA helicase. NS3 serine protease, in association with NS2B, performs its autocleavage and cleaves the polyprotein at dibasic sites in the cytoplasm: C-prM, NS2A-NS2B, NS2B-NS3, NS3-NS4A, NS4A-2K and NS4B-NS5. NS3 RNA helicase binds RNA and unwinds dsRNA in the 3' to 5' direction. Its function is as follows. Regulates the ATPase activity of the NS3 helicase activity. NS4A allows NS3 helicase to conserve energy during unwinding. Functions as a signal peptide for NS4B and is required for the interferon antagonism activity of the latter. Functionally, induces the formation of ER-derived membrane vesicles where the viral replication takes place. Inhibits interferon (IFN)-induced host STAT1 phosphorylation and nuclear translocation, thereby preventing the establishment of cellular antiviral state by blocking the IFN-alpha/beta pathway. Inhibits STAT2 translocation in the nucleus after IFN-alpha treatment. In terms of biological role, replicates the viral (+) and (-) RNA genome, and performs the capping of genomes in the cytoplasm. NS5 methylates viral RNA cap at guanine N-7 and ribose 2'-O positions. Besides its role in RNA genome replication, also prevents the establishment of cellular antiviral state by blocking the interferon-alpha/beta (IFN-alpha/beta) signaling pathway. Inhibits host TYK2 and STAT2 phosphorylation, thereby preventing activation of JAK-STAT signaling pathway. In Usutu virus (USUV), this protein is Genome polyprotein.